A 191-amino-acid chain; its full sequence is Protein NUCLEAR FUSION DEFECTIVE 2 (191 aa).

An N-terminal signal peptide occupies residues 1 to 29 (MATLRFTLLLLVFVVGIFFSFSSVSHVRA). Positions 48–167 (LAKLQTQIGY…IFGAIAIDAG (120 aa)) constitute an RNase III domain.

Functionally, required for karyogamy during female gametophyte development, when the two polar nuclei fuse to form the diploid central cell nucleus. The chain is Protein NUCLEAR FUSION DEFECTIVE 2 from Arabidopsis thaliana (Mouse-ear cress).